The primary structure comprises 172 residues: L-amino acid N-acyltransferase MnaT (172 aa).

Residues 1–163 enclose the N-acetyltransferase domain; it reads MSIRFARKAD…DLTFMQLQLD (163 aa). Acetyl-CoA is bound by residues 85–87, 93–98, Asn-124, and Ser-133; these read VYV and GKGLGR.

Belongs to the acetyltransferase family. PAT/BAR subfamily.

It catalyses the reaction L-methionine + acetyl-CoA = N-acetyl-L-methionine + CoA + H(+). The enzyme catalyses propanoyl-CoA + L-methionine = N-propanoyl-L-methioninate + CoA + H(+). The catalysed reaction is L-alpha-phenylglycine + acetyl-CoA = N-acetyl-L-alpha-phenylglycine + CoA + H(+). It carries out the reaction L-methionine sulfoximine + acetyl-CoA = N-acetyl-L-methionine sulfoximine + CoA + H(+). It catalyses the reaction L-methionine sulfone + acetyl-CoA = N-acetyl-L-methionine sulfone + CoA + H(+). Its function is as follows. Acyltransferase that appears to be required for E.coli optimal growth rate and yield via the formation of N-acetylated amino acids. Catalyzes the acylation of L-methionine using acetyl-CoA or propanoyl-CoA as acyl donors, and the acetylation of L-phenylglycine. Is also able to N-acylate other free L-amino acids and their derivatives using a CoA thioester as cosubstrate. Using acetyl-CoA as an acyl donor, substrate specificity is methionine sulfone &gt; methionine sulfoximine &gt; methionine sulfoxide &gt; methionine. Asparagine, lysine, glutamine, aspartate and glutamate are very poor substrates. Using methionine as a substrate, acyl donor preference is propanoyl-CoA &gt; acetyl-CoA &gt;&gt; butyryl-CoA. Likely plays a role in the resistance against the toxic effects of L-methionine sulfoximine (MSX), via its ability to catalyze its acetylation; MSX is a rare amino acid which inhibits glutamine synthetase (GlnA). The chain is L-amino acid N-acyltransferase MnaT from Escherichia coli (strain K12).